The following is a 425-amino-acid chain: Adenosylhomocysteinase (425 aa).

Substrate-binding residues include threonine 60, aspartate 132, and glutamate 157. NAD(+) is bound at residue 158 to 160; the sequence is TTT. 2 residues coordinate substrate: lysine 187 and aspartate 191. NAD(+) contacts are provided by residues asparagine 192, 221–226, glutamate 244, asparagine 279, 300–302, and asparagine 347; these read GYGWCG and SGH.

It belongs to the adenosylhomocysteinase family. It depends on NAD(+) as a cofactor.

The protein localises to the cytoplasm. It carries out the reaction S-adenosyl-L-homocysteine + H2O = L-homocysteine + adenosine. It functions in the pathway amino-acid biosynthesis; L-homocysteine biosynthesis; L-homocysteine from S-adenosyl-L-homocysteine: step 1/1. In terms of biological role, may play a key role in the regulation of the intracellular concentration of adenosylhomocysteine. This Synechocystis sp. (strain ATCC 27184 / PCC 6803 / Kazusa) protein is Adenosylhomocysteinase.